The following is a 103-amino-acid chain: Entry-fusion complex protein OPG086 (103 aa).

The chain crosses the membrane as a helical; Signal-anchor span at residues 1–21; that stretch reads MTLFLVIFFILFLLLCYFFSF. Over 22-103 the chain is Virion surface; it reads KRTNKMEIGI…KLVPTLLLSK (82 aa).

It belongs to the orthopoxvirus OPG086 family. As to quaternary structure, interacts with OPG099/L5. Component of the entry fusion complex (EFC) composed of OPG053, OPG076, OPG086, OPG094, OPG095, OPG099, OPG107, OPG143, OPG104, OPG147 and OPG155. Except for OPG095 and OPG053, each of the EFC proteins is required for assembly or stability of the complex. Post-translationally, unglycosylated because produced in viral factories instead of the classic ER -Golgi route.

Its subcellular location is the virion membrane. Component of the entry fusion complex (EFC), which consists of 11 proteins. During cell infection, this complex mediates entry of the virion core into the host cytoplasm by a two-step mechanism consisting of lipid mixing of the viral and cellular membranes and subsequent pore formation. This Vertebrata (FPV) protein is Entry-fusion complex protein OPG086 (OPG086).